Consider the following 629-residue polypeptide: MNYHEHFDVIVIGGGHAGTEAAAAAARMGMNTLLLTHNIETLGQMSCNPAIGGIGKGHLVREIDALGGLMANAADKAGIQFRILNGSKGPAVRATRAQADRLLYKAAIREKLENQENLKIFQQEVEDLVVENDRVSGVVTKMGIKFSAKTVVLTVGTFLNGQIHVGLKNHSGGRAGDSASIGLAQRLRELPLRTGRLKTGTPARIDSRSIDFSALEVQHGDNPTPVFSFLGDRSEHPRQIPCYITHTNEKTHDIIRRNLDRSPMYSGVIEGVGPRYCPSIEDKVMRFADKNSHQIFVEPEGLTTNEIYPNGISTSLPFDVQIDFIRSMKGFENAFVTRPGYAIEYDYFDPRDLKSTLESKYIDGLFFAGQINGTTGYEEAAAQGLLAGMNAGLMVQDKEGWCPGRDQAYAGVLVDDLSTLGTKEPYRMFTSRAEYRLLLREDNADTRLTEKGRELGLVDDIRWKAFSMKQESVETEIQRLKNQWIHPKSENASQINALLKTPMQRESTLEGMIRRPEVNYQSLISIEGLGPVLENVQAAEQVEIIIKYQGYVDRQREEIEKLKRNEDTLLPIHLDYSDIKGLSNEVTAKLNDTKPENIGQASRISGITPAAISILLIYIKKNALRRKVL.

Residues 13–18, V125, and S180 contribute to the FAD site; that span reads GGGHAG. 273-287 serves as a coordination point for NAD(+); it reads GPRYCPSIEDKVMRF. Position 370 (Q370) interacts with FAD.

The protein belongs to the MnmG family. Homodimer. Heterotetramer of two MnmE and two MnmG subunits. The cofactor is FAD.

Its subcellular location is the cytoplasm. Its function is as follows. NAD-binding protein involved in the addition of a carboxymethylaminomethyl (cmnm) group at the wobble position (U34) of certain tRNAs, forming tRNA-cmnm(5)s(2)U34. The protein is tRNA uridine 5-carboxymethylaminomethyl modification enzyme MnmG of Psychromonas ingrahamii (strain DSM 17664 / CCUG 51855 / 37).